A 196-amino-acid polypeptide reads, in one-letter code: ATP-dependent Clp protease proteolytic subunit (196 aa).

Ser-101 (nucleophile) is an active-site residue. Residue His-126 is part of the active site.

It belongs to the peptidase S14 family. In terms of assembly, component of the chloroplastic Clp protease core complex.

The protein resides in the plastid. The protein localises to the chloroplast stroma. It carries out the reaction Hydrolysis of proteins to small peptides in the presence of ATP and magnesium. alpha-casein is the usual test substrate. In the absence of ATP, only oligopeptides shorter than five residues are hydrolyzed (such as succinyl-Leu-Tyr-|-NHMec, and Leu-Tyr-Leu-|-Tyr-Trp, in which cleavage of the -Tyr-|-Leu- and -Tyr-|-Trp bonds also occurs).. Cleaves peptides in various proteins in a process that requires ATP hydrolysis. Has a chymotrypsin-like activity. Plays a major role in the degradation of misfolded proteins. In Atropa belladonna (Belladonna), this protein is ATP-dependent Clp protease proteolytic subunit.